Here is a 664-residue protein sequence, read N- to C-terminus: UvrABC system protein B (664 aa).

In terms of domain architecture, Helicase ATP-binding spans 25–182; the sequence is KSFGEGKNKI…RKFLHIQYAR (158 aa). 38–45 contacts ATP; sequence GVTGSGKT. A Beta-hairpin motif is present at residues 91–114; the sequence is YYDYYQPEAYVPSSDTFIEKDMSM. Positions 429-595 constitute a Helicase C-terminal domain; that stretch reads QIEDLLNEIR…TIQKEIHDIL (167 aa). The UVR domain occupies 625 to 660; sequence DKLREALKREMLRYANDMDFEKAAMFRDKMLALGPD.

The protein belongs to the UvrB family. In terms of assembly, forms a heterotetramer with UvrA during the search for lesions. Interacts with UvrC in an incision complex.

The protein localises to the cytoplasm. The UvrABC repair system catalyzes the recognition and processing of DNA lesions. A damage recognition complex composed of 2 UvrA and 2 UvrB subunits scans DNA for abnormalities. Upon binding of the UvrA(2)B(2) complex to a putative damaged site, the DNA wraps around one UvrB monomer. DNA wrap is dependent on ATP binding by UvrB and probably causes local melting of the DNA helix, facilitating insertion of UvrB beta-hairpin between the DNA strands. Then UvrB probes one DNA strand for the presence of a lesion. If a lesion is found the UvrA subunits dissociate and the UvrB-DNA preincision complex is formed. This complex is subsequently bound by UvrC and the second UvrB is released. If no lesion is found, the DNA wraps around the other UvrB subunit that will check the other stand for damage. The protein is UvrABC system protein B of Leptospira biflexa serovar Patoc (strain Patoc 1 / Ames).